Reading from the N-terminus, the 420-residue chain is Dynein axonemal assembly factor 4 (420 aa).

In terms of domain architecture, CS spans 3 to 87 (LQVSDYSWQQ…KEAAMWETLS (85 aa)). The interval 7–103 (DYSWQQTKTA…EMMQRIREKS (97 aa)) is mediates interaction with ESR1 and STUB1. TPR repeat units lie at residues 290 to 323 (PEWLKDKGNKLFATENYLAAINAYNLAIRLNNKM), 324 to 357 (PLLYLNRAACHLKLKNLHKAIEDSSKALELLMPP), and 366 to 399 (MKAHVRRGTAFCQLELYVEGLQDYEAALKIDPSN).

Interacts with ZMYND10. Interacts with STUB1. Interacts with ESR1 and ESR2. Interacts with DNAAF2. Interacts with CCT3, CCT4, CCT5 and CCT8. Interacts with DNAAF6/PIH1D3.

The protein localises to the nucleus. The protein resides in the cytoplasm. Its subcellular location is the cell projection. It localises to the neuron projection. It is found in the dynein axonemal particle. Functionally, involved in neuronal migration during development of the cerebral neocortex. May regulate the stability and proteasomal degradation of the estrogen receptors that play an important role in neuronal differentiation, survival and plasticity. Axonemal dynein assembly factor required for ciliary motility. The protein is Dynein axonemal assembly factor 4 of Pan paniscus (Pygmy chimpanzee).